Here is a 242-residue protein sequence, read N- to C-terminus: UPF0246 protein SSA_1395 (242 aa).

Belongs to the UPF0246 family.

The chain is UPF0246 protein SSA_1395 from Streptococcus sanguinis (strain SK36).